A 328-amino-acid chain; its full sequence is Beta-agarase C (328 aa).

Positions 1–17 (MNLTKMAVFAASLFCLA) are cleaved as a signal peptide. The propeptide occupies 18-67 (CKNDIDTELEKKSIPESEIQKSEEKLPNEEELTPTDPDEETNKEETVTAN). The span at 26–45 (LEKKSIPESEIQKSEEKLPN) shows a compositional bias: basic and acidic residues. Positions 26–61 (LEKKSIPESEIQKSEEKLPNEEELTPTDPDEETNKE) are disordered. Residues 46-59 (EEELTPTDPDEETN) show a composition bias toward acidic residues. Residues 70-328 (YDFTGNTPPP…WIHTYQLVEE (259 aa)) enclose the GH16 domain. Substrate is bound by residues tryptophan 110, 119 to 129 (KAENSGVSDGK), 133 to 135 (KAT), glutamate 188, glutamate 193, and arginine 224. Glutamate 188 functions as the Nucleophile in the catalytic mechanism. Glutamate 193 functions as the Proton donor in the catalytic mechanism.

Belongs to the glycosyl hydrolase 16 family.

The protein resides in the secreted. It catalyses the reaction Hydrolysis of (1-&gt;4)-beta-D-galactosidic linkages in agarose, giving the tetramer as the predominant product.. Functionally, cleaves the beta-1,4-linkages between beta-D-galactose and alpha-L-3,6-anhydro-galactose residues in agarose. Cleaves agarose in a random manner with retention of the anomeric-bond configuration, producing beta-anomers that give rise progressively to alpha-anomers when mutarotation takes place. This is Beta-agarase C (agaC) from Zobellia galactanivorans (strain DSM 12802 / CCUG 47099 / CIP 106680 / NCIMB 13871 / Dsij).